Reading from the N-terminus, the 1427-residue chain is DNA-directed RNA polymerase subunit beta' (1427 aa).

Residues Cys66, Cys68, Cys81, and Cys84 each coordinate Zn(2+). 3 residues coordinate Mg(2+): Asp472, Asp474, and Asp476. Residues Cys815, Cys889, Cys896, and Cys899 each contribute to the Zn(2+) site.

It belongs to the RNA polymerase beta' chain family. As to quaternary structure, the RNAP catalytic core consists of 2 alpha, 1 beta, 1 beta' and 1 omega subunit. When a sigma factor is associated with the core the holoenzyme is formed, which can initiate transcription. Requires Mg(2+) as cofactor. Zn(2+) is required as a cofactor.

It carries out the reaction RNA(n) + a ribonucleoside 5'-triphosphate = RNA(n+1) + diphosphate. Functionally, DNA-dependent RNA polymerase catalyzes the transcription of DNA into RNA using the four ribonucleoside triphosphates as substrates. The chain is DNA-directed RNA polymerase subunit beta' from Bacteroides fragilis (strain ATCC 25285 / DSM 2151 / CCUG 4856 / JCM 11019 / LMG 10263 / NCTC 9343 / Onslow / VPI 2553 / EN-2).